Reading from the N-terminus, the 54-residue chain is U7-myrmicitoxin-Tb1a (54 aa).

Positions 1–26 (MQLSHLLLAFAMIFVMTIIHTPQVQA) are cleaved as a signal peptide. Positions 27–36 (DAMADADADA) are excised as a propeptide. Cys-40 and Cys-49 are disulfide-bonded.

In terms of tissue distribution, expressed by the venom gland.

It is found in the secreted. Its function is as follows. Venom protein with unknown function. Does not induce paralysis when a high dose is administered by intrathoracic injection into the blowfly Lucilia caesar. This is U7-myrmicitoxin-Tb1a from Tetramorium bicarinatum (Tramp ant).